The following is a 349-amino-acid chain: tRNA pseudouridine synthase D (349 aa).

Substrate is bound at residue Phe26. Asp79 acts as the Nucleophile in catalysis. Residue Asn128 participates in substrate binding. Positions 154 to 302 (GVPNYFGSQR…VEGARRAILL (149 aa)) constitute a TRUD domain. Phe328 is a substrate binding site.

This sequence belongs to the pseudouridine synthase TruD family.

It catalyses the reaction uridine(13) in tRNA = pseudouridine(13) in tRNA. Responsible for synthesis of pseudouridine from uracil-13 in transfer RNAs. The sequence is that of tRNA pseudouridine synthase D from Yersinia enterocolitica serotype O:8 / biotype 1B (strain NCTC 13174 / 8081).